A 623-amino-acid polypeptide reads, in one-letter code: Glutathione import ATP-binding protein GsiA (623 aa).

2 ABC transporter domains span residues V15 to L269 and L325 to M564. ATP contacts are provided by residues G49–S56 and G357–S364.

This sequence belongs to the ABC transporter superfamily. Glutathione importer (TC 3.A.1.5.11) family. In terms of assembly, the complex is composed of two ATP-binding proteins (GsiA), two transmembrane proteins (GsiC and GsiD) and a solute-binding protein (GsiB).

It localises to the cell inner membrane. The enzyme catalyses glutathione(out) + ATP + H2O = glutathione(in) + ADP + phosphate + H(+). Part of the ABC transporter complex GsiABCD involved in glutathione import. Responsible for energy coupling to the transport system. The polypeptide is Glutathione import ATP-binding protein GsiA (Salmonella typhimurium (strain LT2 / SGSC1412 / ATCC 700720)).